The following is a 176-amino-acid chain: Disulfide bond formation protein B (176 aa).

Residues 1–14 (MLRFLNQCSRGRGA) are Cytoplasmic-facing. The helical transmembrane segment at 15-31 (WLLMAFTALALEMVALW) threads the bilayer. Residues 32–49 (FQHVMLLKPCVLCIYERC) are Periplasmic-facing. A disulfide bridge connects residues Cys41 and Cys44. The chain crosses the membrane as a helical span at residues 50–65 (ALFGVMGAGLVGAIAP). Over 66 to 71 (KTPLRY) the chain is Cytoplasmic. Residues 72–89 (VAMVIWIYSAWRGLQLAY) form a helical membrane-spanning segment. At 90–144 (EHTMIQLHPSPFMTCDFMARFPDWLPLGKWLPQVFVASGDCAERQWSFLTLEMPQ) the chain is on the periplasmic side. The cysteines at positions 104 and 130 are disulfide-linked. A helical transmembrane segment spans residues 145–163 (WLLGIFAAYLVVAIAVVIA). The Cytoplasmic portion of the chain corresponds to 164–176 (QAFKPKKRDLFGR).

Belongs to the DsbB family.

The protein localises to the cell inner membrane. Required for disulfide bond formation in some periplasmic proteins. Acts by oxidizing the DsbA protein. The protein is Disulfide bond formation protein B of Salmonella paratyphi A (strain ATCC 9150 / SARB42).